The primary structure comprises 245 residues: Octanoyltransferase (245 aa).

Positions 54–242 (QNAPEQVWLL…AFEQIFGPTI (189 aa)) constitute a BPL/LPL catalytic domain. Residues 93–100 (RGGEFTYH), 173–175 (AIG), and 186–188 (GVS) each bind substrate. Cys-204 (acyl-thioester intermediate) is an active-site residue.

This sequence belongs to the LipB family.

The protein resides in the cytoplasm. The enzyme catalyses octanoyl-[ACP] + L-lysyl-[protein] = N(6)-octanoyl-L-lysyl-[protein] + holo-[ACP] + H(+). It participates in protein modification; protein lipoylation via endogenous pathway; protein N(6)-(lipoyl)lysine from octanoyl-[acyl-carrier-protein]: step 1/2. Functionally, catalyzes the transfer of endogenously produced octanoic acid from octanoyl-acyl-carrier-protein onto the lipoyl domains of lipoate-dependent enzymes. Lipoyl-ACP can also act as a substrate although octanoyl-ACP is likely to be the physiological substrate. This chain is Octanoyltransferase, found in Bartonella quintana (strain Toulouse) (Rochalimaea quintana).